A 122-amino-acid polypeptide reads, in one-letter code: Small ribosomal subunit protein uS13 (122 aa).

Residues 97 to 122 (PVRGQRTHTNARTRKGPAKAIAGKKK) are disordered.

It belongs to the universal ribosomal protein uS13 family. Part of the 30S ribosomal subunit. Forms a loose heterodimer with protein S19. Forms two bridges to the 50S subunit in the 70S ribosome.

Located at the top of the head of the 30S subunit, it contacts several helices of the 16S rRNA. In the 70S ribosome it contacts the 23S rRNA (bridge B1a) and protein L5 of the 50S subunit (bridge B1b), connecting the 2 subunits; these bridges are implicated in subunit movement. Contacts the tRNAs in the A and P-sites. The chain is Small ribosomal subunit protein uS13 from Bartonella quintana (strain Toulouse) (Rochalimaea quintana).